Here is a 217-residue protein sequence, read N- to C-terminus: Peptide methionine sulfoxide reductase MsrA (217 aa).

The active site involves Cys-56.

It belongs to the MsrA Met sulfoxide reductase family.

The enzyme catalyses L-methionyl-[protein] + [thioredoxin]-disulfide + H2O = L-methionyl-(S)-S-oxide-[protein] + [thioredoxin]-dithiol. The catalysed reaction is [thioredoxin]-disulfide + L-methionine + H2O = L-methionine (S)-S-oxide + [thioredoxin]-dithiol. Functionally, has an important function as a repair enzyme for proteins that have been inactivated by oxidation. Catalyzes the reversible oxidation-reduction of methionine sulfoxide in proteins to methionine. The chain is Peptide methionine sulfoxide reductase MsrA from Corynebacterium melassecola.